A 944-amino-acid chain; its full sequence is MFAWWGRTVYRYRFIVIGVMVALCLGGGVFGLSLGKHVTQSGFYDDGSQSVQASVLGDQVYGRDRSGHIVAIFQAPAGKTVDDPAWSKKVVDELNRFQQDHPDQVLGWAGYLRASQATGMATADKKYTFVSIPLKGDDDDTILNNYKAIAPDLQRLDGGTVKLAGLQPVAEALTGTIATDQRRMEVLALPLVAVVLFFVFGGVIAAGLPVMVGGLCIAGALGIMRFLAIFGPVHYFAQPVVSLIGLGIAIDYGLFIVSRFREEIAEGYDTETAVRRTVITAGRTVTFSAVLIVASAIGLLLFPQGFLKSLTYATIASVMLSAILSITVLPACLGILGKHVDALGVRTLFRVPFLANWKISAAYLNWLADRLQRTKTREEVEAGFWGKLVNRVMKRPVLFAAPIVIIMILLIIPVGKLSLGGISEKYLPPTNSVRQAQEEFDKLFPGYRTNPLTLVIQTSNHQPVTDAQIADIRSKAMAIGGFIEPDNDPANMWQERAYAVGASKDPSVRVLQNGLINPADASKKLTELRAITPPKGITVLVGGTPALELDSIHGLFAKMPLMVVILLTTTIVLMFLAFGSVVLPIKATLMSALTLGSTMGILTWIFVDGHFSKWLNFTPTPLTAPVIGLIIALVFGLSTDYEVFLVSRMVEARERGMSTQEAIRIGTAATGRIITAAALIVAVVAGAFVFSDLVMMKYLAFGLMAALLLDATVVRMFLVPSVMKLLGDDCWWAPRWARRLQTRIGLGEIHLPDERKRPVSNGRPARPPVTAGLVAARAAGDPRPPHDPTHPLAESPRPARSSPASSPELTPALEATAAPAAPSGASTTRMQIGSSTEPPTTRLAAAGRSVQSPASTPPPTPTPPSAPSAGQTRAMPLAANRSTDAAGDPAEPTAALPIIRSDGDDSEAATEQLNARGTSDKTRQRRRGGGALSAQDLLRREGRL.

Over 1–13 (MFAWWGRTVYRYR) the chain is Cytoplasmic. Residues 14–34 (FIVIGVMVALCLGGGVFGLSL) form a helical membrane-spanning segment. Residues 35–185 (GKHVTQSGFY…TIATDQRRME (151 aa)) are Periplasmic-facing. A 1,2-diacylglycero-3-phosphoethanolamine is bound at residue 40-44 (QSGFY). A helical membrane pass occupies residues 186 to 206 (VLALPLVAVVLFFVFGGVIAA). Residues 207-209 (GLP) are Cytoplasmic-facing. A helical membrane pass occupies residues 210–230 (VMVGGLCIAGALGIMRFLAIF). Residues 231 to 235 (GPVHY) are Periplasmic-facing. The chain crosses the membrane as a helical span at residues 236–256 (FAQPVVSLIGLGIAIDYGLFI). Topologically, residues 257-286 (VSRFREEIAEGYDTETAVRRTVITAGRTVT) are cytoplasmic. Residues 287-307 (FSAVLIVASAIGLLLFPQGFL) traverse the membrane as a helical segment. The Periplasmic portion of the chain corresponds to 308-314 (KSLTYAT). A helical transmembrane segment spans residues 315 to 335 (IASVMLSAILSITVLPACLGI). Topologically, residues 336–396 (LGKHVDALGV…KLVNRVMKRP (61 aa)) are cytoplasmic. The helical transmembrane segment at 397–417 (VLFAAPIVIIMILLIIPVGKL) threads the bilayer. Topologically, residues 418–562 (SLGGISEKYL…HGLFAKMPLM (145 aa)) are periplasmic. A helical membrane pass occupies residues 563–583 (VVILLTTTIVLMFLAFGSVVL). Topologically, residues 584–586 (PIK) are cytoplasmic. A helical membrane pass occupies residues 587–607 (ATLMSALTLGSTMGILTWIFV). The Periplasmic segment spans residues 608–616 (DGHFSKWLN). The helical transmembrane segment at 617–637 (FTPTPLTAPVIGLIIALVFGL) threads the bilayer. Residues 638–672 (STDYEVFLVSRMVEARERGMSTQEAIRIGTAATGR) are Cytoplasmic-facing. Residues 673-693 (IITAAALIVAVVAGAFVFSDL) form a helical membrane-spanning segment. Over 694–698 (VMMKY) the chain is Periplasmic. The chain crosses the membrane as a helical span at residues 699 to 719 (LAFGLMAALLLDATVVRMFLV). The Cytoplasmic segment spans residues 720 to 944 (PSVMKLLGDD…QDLLRREGRL (225 aa)). The disordered stretch occupies residues 778–944 (AAGDPRPPHD…QDLLRREGRL (167 aa)). Low complexity predominate over residues 791 to 828 (PLAESPRPARSSPASSPELTPALEATAAPAAPSGASTT). Positions 829–839 (RMQIGSSTEPP) are enriched in polar residues. Positions 855–866 (STPPPTPTPPSA) are enriched in pro residues.

The protein belongs to the resistance-nodulation-cell division (RND) (TC 2.A.6) family. MmpL subfamily. Monomer. Interacts with TtfA (via N-terminus); active trehalose monomycolate (TMM) biosynthesis is not required for the complex formation.

Its subcellular location is the cell inner membrane. The protein localises to the cell septum. It is found in the cell tip. With respect to regulation, inhibited by the antitubercular drug SQ109. Also inhibited by several other compounds such as the pyrrole derivative BM212, the adamantyl urea derivative AU1235, the benzimidazole C215, indoleamides, tetrahydropyrazolo[1,5-a]pyrimidine-3-carboxamide (THPP) and N-benzyl-6',7'-dihydrospiro[piperidine-4,4'-thieno[3,2-c]pyran] (Spiro) analogs. Inhibitory effects of these compounds, including SQ109, are most likely due to their ability to dissipate the transmembrane electrochemical proton gradient. Transports trehalose monomycolate (TMM) to the cell wall. Flips TMM across the inner membrane. Membrane potential is not required for this function. Transports probably phosphatidylethanolamine (PE) as well. Binds specifically both TMM and PE, but not trehalose dimycolate (TDM). Also binds diacylglycerol (DAG) and other phospholipids, including phosphatidylglycerol (PG), phosphatidylinositol (PI), and cardiolipin (CDL). Contributes to membrane potential, cell wall composition, antibiotic susceptibility and fitness. Could also be part of a heme-iron acquisition system. In terms of biological role, is the target of the antitubercular drug SQ109. In Mycobacterium tuberculosis (strain ATCC 25618 / H37Rv), this protein is Trehalose monomycolate exporter MmpL3 (mmpL3).